Reading from the N-terminus, the 466-residue chain is Soluble pyridine nucleotide transhydrogenase (466 aa).

36-45 (ERYQNVGGGC) is an FAD binding site.

This sequence belongs to the class-I pyridine nucleotide-disulfide oxidoreductase family. It depends on FAD as a cofactor.

The protein resides in the cytoplasm. The enzyme catalyses NAD(+) + NADPH = NADH + NADP(+). Conversion of NADPH, generated by peripheral catabolic pathways, to NADH, which can enter the respiratory chain for energy generation. The protein is Soluble pyridine nucleotide transhydrogenase of Escherichia coli O127:H6 (strain E2348/69 / EPEC).